A 245-amino-acid chain; its full sequence is uncharacterized protein (245 aa).

The signal sequence occupies residues 1-20; sequence MIKQTIVALLLSVGASSVFA.

The protein to E.coli YmcB.

This is an uncharacterized protein from Escherichia coli (strain K12).